We begin with the raw amino-acid sequence, 371 residues long: Capsular polysaccharide phosphotransferase cps12A (371 aa).

This sequence belongs to the stealth family.

Functionally, part of a capsular polysaccharide synthesis locus. This is Capsular polysaccharide phosphotransferase cps12A (cps12A) from Actinobacillus pleuropneumoniae (Haemophilus pleuropneumoniae).